Reading from the N-terminus, the 324-residue chain is Phospho-N-acetylmuramoyl-pentapeptide-transferase (324 aa).

Transmembrane regions (helical) follow at residues 13 to 33 (VLSALLMGFAFSMVLGPIFIP), 59 to 79 (PTMGGLIFFISVTVTMLIIGY), 85 to 105 (GMVVLYSLIAFGIIGFLDDIL), 121 to 141 (MILLLLFSIALAYYGYTNIGT), 143 to 163 (IIIPFMNSKLNLGIFYIPLVV), 179 to 199 (IDGLASSVTVIVLTFFAIVGF), 201 to 221 (TGHYQVGVFSIALAGALLGFL), 243 to 263 (AIATIALILKMPLFIIIVGGI), and 303 to 323 (VKLVTVFSIITLILCIIGFIA).

This sequence belongs to the glycosyltransferase 4 family. MraY subfamily. Mg(2+) is required as a cofactor.

The protein resides in the cell membrane. The enzyme catalyses UDP-N-acetyl-alpha-D-muramoyl-L-alanyl-gamma-D-glutamyl-meso-2,6-diaminopimeloyl-D-alanyl-D-alanine + di-trans,octa-cis-undecaprenyl phosphate = di-trans,octa-cis-undecaprenyl diphospho-N-acetyl-alpha-D-muramoyl-L-alanyl-D-glutamyl-meso-2,6-diaminopimeloyl-D-alanyl-D-alanine + UMP. It participates in cell wall biogenesis; peptidoglycan biosynthesis. In terms of biological role, catalyzes the initial step of the lipid cycle reactions in the biosynthesis of the cell wall peptidoglycan: transfers peptidoglycan precursor phospho-MurNAc-pentapeptide from UDP-MurNAc-pentapeptide onto the lipid carrier undecaprenyl phosphate, yielding undecaprenyl-pyrophosphoryl-MurNAc-pentapeptide, known as lipid I. The sequence is that of Phospho-N-acetylmuramoyl-pentapeptide-transferase from Clostridium botulinum (strain Alaska E43 / Type E3).